The sequence spans 588 residues: Glutathione/L-cysteine transport system ATP-binding/permease protein CydD (588 aa).

Residues 1-15 (MNKSRQKELTRWLKQ) lie on the Cytoplasmic side of the membrane. The next 2 helical transmembrane spans lie at 16 to 36 (QSVI…VSGI) and 37 to 57 (LIIA…MENI). One can recognise an ABC transmembrane type-1 domain in the interval 20–306 (SQRWLNISRL…APEFFQPLRD (287 aa)). Residues 58 to 136 (PREALLLPFT…LEQIDDMHDY (79 aa)) are Cytoplasmic-facing. Residues 137–157 (YARYLPQMALAVSVPLLIVVA) form a helical membrane-spanning segment. At 158-161 (IFPS) the chain is on the periplasmic side. A helical transmembrane segment spans residues 162 to 182 (NWAAALILLGTAPLIPLFMAL). Residues 183–249 (VGMGAADANR…MEVLRLAFLS (67 aa)) are Cytoplasmic-facing. The helical transmembrane segment at 250–270 (SGILEFFTSLSIALVAVYFGF) threads the bilayer. The Periplasmic segment spans residues 271–276 (SYLGEL). A helical membrane pass occupies residues 277–297 (DFGHYDTGVTLAAGFLALILA). Over 298–573 (PEFFQPLRDL…QGRYAELSVA (276 aa)) the chain is Cytoplasmic. An ABC transporter domain is found at 339–572 (EAELASTDPV…EQGRYAELSV (234 aa)). 373-380 (LPAGQRAV) is a binding site for ATP.

It belongs to the ABC transporter superfamily. Cysteine exporter (TC 3.A.1.129.1) family. In terms of assembly, forms a heterodimer with CydC.

Its subcellular location is the cell inner membrane. The enzyme catalyses L-cysteine(in) + ATP + H2O = L-cysteine(out) + ADP + phosphate + H(+). The catalysed reaction is glutathione(in) + ATP + H2O = glutathione(out) + ADP + phosphate + H(+). Its activity is regulated as follows. ATPase activity is stimulated by various thiol compounds. The presence of heme leads to a further enhancement of thiol-stimulated ATPase activity, although a large excess of heme inhibits activity. Glutathione transport is inhibited by sodium orthovanadate, an inhibitor of ABC-type transport systems, but not by the proton ionophore carbonyl cyanide m-chlorophenylhydrazone (CCCP). In terms of biological role, part of the ABC transporter complex CydDC that exports the reduced low-molecular-weight thiols cysteine and glutathione to the periplasm. Export of these thiol-containing redox-active molecules may be crucial for redox homeostasis in the periplasm, permitting correct assembly of various respiratory complexes and formation of correct disulfide bonds in periplasmic and secreted proteins. CydD contains transmembrane domains (TMD), which form a pore in the inner membrane, and an ATP-binding domain (NBD), which is responsible for energy generation. Required for the assembly of functional cytochrome bd-type quinol oxidases and periplasmic c-type cytochromes. Overexpression of CydDC under anaerobic conditions also results in the formation of a heme biosynthesis-derived pigment, P-574. CydDC binds heme b, but heme is probably not transported by the complex and instead has a role in regulating ATPase activity. Conversely, a more recent study suggests an alternative function of CydDC: authors suggest that CydDC does not mediate the export of L-cysteine but rather reduces cytoplasmic L-cystine to L-cysteine. The principle function of CydDC would be to maintain the reduced state of cytoplasmic L-cysteine, thereby providing an important connection between sulfur metabolism, oxidative stress and resistance to antibiotics. This is Glutathione/L-cysteine transport system ATP-binding/permease protein CydD from Escherichia coli (strain K12).